We begin with the raw amino-acid sequence, 239 residues long: Purine nucleoside phosphorylase DeoD-type (239 aa).

Histidine 5 is an a purine D-ribonucleoside binding site. Phosphate-binding positions include glycine 21, arginine 25, arginine 44, and arginine 88–serine 91. Residues glutamate 180–glutamate 182 and threonine 204–aspartate 205 each bind a purine D-ribonucleoside. Catalysis depends on aspartate 205, which acts as the Proton donor.

It belongs to the PNP/UDP phosphorylase family. As to quaternary structure, homohexamer; trimer of homodimers.

The enzyme catalyses a purine D-ribonucleoside + phosphate = a purine nucleobase + alpha-D-ribose 1-phosphate. It catalyses the reaction a purine 2'-deoxy-D-ribonucleoside + phosphate = a purine nucleobase + 2-deoxy-alpha-D-ribose 1-phosphate. Functionally, catalyzes the reversible phosphorolytic breakdown of the N-glycosidic bond in the beta-(deoxy)ribonucleoside molecules, with the formation of the corresponding free purine bases and pentose-1-phosphate. The polypeptide is Purine nucleoside phosphorylase DeoD-type (Aliivibrio fischeri (strain ATCC 700601 / ES114) (Vibrio fischeri)).